Here is a 184-residue protein sequence, read N- to C-terminus: CASP-like protein 1U2 (184 aa).

The Cytoplasmic segment spans residues 1-16 (MSYGCQVSDDEPNGSK). Residues 17 to 37 (AVSLLLRLSTLALALTSAVVM) form a helical membrane-spanning segment. The Extracellular segment spans residues 38–62 (ATASECTVVQLNGVVATITYKDFPP). The chain crosses the membrane as a helical span at residues 63–83 (FVYLVGFNIAAAMLEAAAIYL). Topologically, residues 84–100 (RLSTGGGDDDDEGFKGK) are cytoplasmic. The chain crosses the membrane as a helical span at residues 101-121 (LPGILLVVIDVAVQALVYTAT). Residues 122–153 (GGAFAAVSAYGPQINACGAGAGRFCGQVHQSK) are Extracellular-facing. The helical transmembrane segment at 154 to 174 (LLSFAGSAAVGLAVVFRDVSL) threads the bilayer. Topologically, residues 175–184 (PFSLWPTSSD) are cytoplasmic.

The protein belongs to the Casparian strip membrane proteins (CASP) family. As to quaternary structure, homodimer and heterodimers.

It localises to the cell membrane. In Oryza sativa subsp. japonica (Rice), this protein is CASP-like protein 1U2.